A 146-amino-acid polypeptide reads, in one-letter code: Anti-sigma F factor (146 aa).

It belongs to the anti-sigma-factor family.

It carries out the reaction L-seryl-[protein] + ATP = O-phospho-L-seryl-[protein] + ADP + H(+). It catalyses the reaction L-threonyl-[protein] + ATP = O-phospho-L-threonyl-[protein] + ADP + H(+). In terms of biological role, binds to sigma F and blocks its ability to form an RNA polymerase holoenzyme (E-sigma F). Phosphorylates SpoIIAA on a serine residue. This phosphorylation may enable SpoIIAA to act as an anti-anti-sigma factor that counteracts SpoIIAB and thus releases sigma F from inhibition. The protein is Anti-sigma F factor of Bacillus licheniformis.